Reading from the N-terminus, the 898-residue chain is Endoplasmic reticulum metallopeptidase 1 (898 aa).

Met-1 carries the N-acetylmethionine modification. The tract at residues 1 to 55 is disordered; the sequence is MEWSSESAAVRRHRGTAERREGEAAASHRQREASAQEDAKGVGRMWGKTENGGGS. Residues 1–66 are Cytoplasmic-facing; the sequence is MEWSSESAAV…VAKTALSEAR (66 aa). The span at 29 to 41 shows a compositional bias: basic and acidic residues; the sequence is RQREASAQEDAKG. A helical membrane pass occupies residues 67–87; that stretch reads TALALALYLLALRALVQLSLQ. The Lumenal portion of the chain corresponds to 88–393; the sequence is RLVLSRTSGL…SSSEYRHGSM (306 aa). Residue Asn-176 is glycosylated (N-linked (GlcNAc...) asparagine). Cysteines 198 and 216 form a disulfide. Zn(2+) is bound by residues His-199 and Asp-211. The active-site Proton acceptor is Glu-245. Zn(2+) contacts are provided by Glu-246, Glu-272, and His-348. Residues 394 to 414 traverse the membrane as a helical segment; the sequence is VFFDVLGLLVIAYPSRVGSII. Topologically, residues 415 to 451 are cytoplasmic; the sequence is NYMVVMAVVLYLGKKLLRPKHRNANYMRDFLCGLGIT. The helical transmembrane segment at 452-472 threads the bilayer; sequence FISWFTSLVTVLIIAVFISLI. Residues 473–480 are Lumenal-facing; it reads GQSLSWYN. A helical transmembrane segment spans residues 481–501; that stretch reads YFYIAVCLYGTATVAKIIFIH. Over 502 to 515 the chain is Cytoplasmic; it reads TLAKRFYYMNASDL. The chain crosses the membrane as a helical span at residues 516-538; the sequence is YLGELFFDTSLFVHCAFLVALTY. Over 539 to 542 the chain is Lumenal; that stretch reads QGFC. Residues 543 to 562 form a helical membrane-spanning segment; sequence SAFMSAVWVVFPLLTKLCVY. At 563–573 the chain is on the cytoplasmic side; it reads KDFKKHGAQGR. The helical transmembrane segment at 574–594 threads the bilayer; sequence FVALYLLGMFIPYLYGLYLIW. The Lumenal segment spans residues 595-615; sequence AVFEMFTPILGRSGSEIPPDV. A helical transmembrane segment spans residues 616 to 636; sequence VLASILAVCVMILSSYFITFI. Topologically, residues 637 to 645 are cytoplasmic; the sequence is YLVNSTKKT. Residues 646 to 666 form a helical membrane-spanning segment; sequence ILTLILVCAVTFLLVCSGAFF. At 667 to 898 the chain is on the lumenal side; sequence PYSSNPESPK…WVSTYSLFVF (232 aa). N-linked (GlcNAc...) asparagine glycosylation occurs at Asn-724.

The protein belongs to the peptidase M28 family. Requires Zn(2+) as cofactor.

Its subcellular location is the endoplasmic reticulum membrane. In terms of biological role, within the ovary, required for the organization of somatic cells and oocytes into discrete follicular structures. The sequence is that of Endoplasmic reticulum metallopeptidase 1 from Mus musculus (Mouse).